Reading from the N-terminus, the 166-residue chain is Transcriptional repressor NrdR (166 aa).

Residues 3–34 (CPHCHHNGSRVVDSRPTDDGRVIRRRRECESC) fold into a zinc finger. The ATP-cone domain occupies 49-139 (LLVIKKNGTR…VYRQFKDTGV (91 aa)).

It belongs to the NrdR family. Zn(2+) is required as a cofactor.

Negatively regulates transcription of bacterial ribonucleotide reductase nrd genes and operons by binding to NrdR-boxes. This Levilactobacillus brevis (strain ATCC 367 / BCRC 12310 / CIP 105137 / JCM 1170 / LMG 11437 / NCIMB 947 / NCTC 947) (Lactobacillus brevis) protein is Transcriptional repressor NrdR.